The chain runs to 339 residues: Phenylalanine--tRNA ligase alpha subunit (339 aa).

E254 serves as a coordination point for Mg(2+).

It belongs to the class-II aminoacyl-tRNA synthetase family. Phe-tRNA synthetase alpha subunit type 1 subfamily. As to quaternary structure, tetramer of two alpha and two beta subunits. Requires Mg(2+) as cofactor.

The protein localises to the cytoplasm. It catalyses the reaction tRNA(Phe) + L-phenylalanine + ATP = L-phenylalanyl-tRNA(Phe) + AMP + diphosphate + H(+). The protein is Phenylalanine--tRNA ligase alpha subunit of Clostridium acetobutylicum (strain ATCC 824 / DSM 792 / JCM 1419 / IAM 19013 / LMG 5710 / NBRC 13948 / NRRL B-527 / VKM B-1787 / 2291 / W).